A 455-amino-acid chain; its full sequence is Ribulose bisphosphate carboxylase large chain (455 aa).

Residue K5 is modified to N6,N6,N6-trimethyllysine. Positions 114 and 164 each coordinate substrate. K166 (proton acceptor) is an active-site residue. Position 168 (K168) interacts with substrate. Residues K192, D194, and E195 each contribute to the Mg(2+) site. K192 carries the post-translational modification N6-carboxylysine. H285 functions as the Proton acceptor in the catalytic mechanism. Positions 286, 318, and 370 each coordinate substrate.

Belongs to the RuBisCO large chain family. Type I subfamily. As to quaternary structure, heterohexadecamer of 8 large chains and 8 small chains; disulfide-linked. The disulfide link is formed within the large subunit homodimers. The cofactor is Mg(2+). Post-translationally, the disulfide bond which can form in the large chain dimeric partners within the hexadecamer appears to be associated with oxidative stress and protein turnover.

The protein localises to the plastid. It localises to the chloroplast. The catalysed reaction is 2 (2R)-3-phosphoglycerate + 2 H(+) = D-ribulose 1,5-bisphosphate + CO2 + H2O. It carries out the reaction D-ribulose 1,5-bisphosphate + O2 = 2-phosphoglycolate + (2R)-3-phosphoglycerate + 2 H(+). Its function is as follows. RuBisCO catalyzes two reactions: the carboxylation of D-ribulose 1,5-bisphosphate, the primary event in carbon dioxide fixation, as well as the oxidative fragmentation of the pentose substrate in the photorespiration process. Both reactions occur simultaneously and in competition at the same active site. The chain is Ribulose bisphosphate carboxylase large chain from Lupinus albus (White lupine).